The chain runs to 259 residues: 3-oxo-5-alpha-steroid 4-dehydrogenase 1 (259 aa).

Helical transmembrane passes span 10–30 (LCLL…SIVG), 86–106 (VLLA…PVLI), 111–131 (PTLL…GYVQ), 146–166 (VTHP…VINI), and 206–226 (WCGF…LFTL).

This sequence belongs to the steroid 5-alpha reductase family. In terms of tissue distribution, liver and prostate (at a low level).

The protein resides in the microsome membrane. The protein localises to the endoplasmic reticulum membrane. It catalyses the reaction a 3-oxo-5alpha-steroid + NADP(+) = a 3-oxo-Delta(4)-steroid + NADPH + H(+). The catalysed reaction is 5alpha-pregnane-3,20-dione + NADP(+) = progesterone + NADPH + H(+). It carries out the reaction 17beta-hydroxy-5alpha-androstan-3-one + NADP(+) = testosterone + NADPH + H(+). The enzyme catalyses androst-4-ene-3,17-dione + NADPH + H(+) = 5alpha-androstan-3,17-dione + NADP(+). In terms of biological role, converts testosterone into 5-alpha-dihydrotestosterone and progesterone or corticosterone into their corresponding 5-alpha-3-oxosteroids. It plays a central role in sexual differentiation and androgen physiology. This is 3-oxo-5-alpha-steroid 4-dehydrogenase 1 from Rattus norvegicus (Rat).